The chain runs to 212 residues: 2-dehydro-3-deoxy-phosphogluconate aldolase (212 aa).

Glu-45 functions as the Proton acceptor in the catalytic mechanism. Residues Arg-49, Thr-73, and Lys-133 each coordinate pyruvate. Lys-133 functions as the Schiff-base intermediate with substrate in the catalytic mechanism.

Belongs to the KHG/KDPG aldolase family. Homotrimer.

The protein localises to the cytoplasm. The enzyme catalyses 2-dehydro-3-deoxy-6-phospho-D-gluconate = D-glyceraldehyde 3-phosphate + pyruvate. It participates in carbohydrate acid metabolism; 2-dehydro-3-deoxy-D-gluconate degradation; D-glyceraldehyde 3-phosphate and pyruvate from 2-dehydro-3-deoxy-D-gluconate: step 2/2. Involved in the degradation of glucose via the Entner-Doudoroff pathway. Catalyzes the reversible, stereospecific retro-aldol cleavage of 2-keto-3-deoxy-6-phosphogluconate (KDPG) to pyruvate and D-glyceraldehyde-3-phosphate. The polypeptide is 2-dehydro-3-deoxy-phosphogluconate aldolase (eda) (Haemophilus influenzae (strain ATCC 51907 / DSM 11121 / KW20 / Rd)).